Reading from the N-terminus, the 412-residue chain is Putative potassium channel protein RPA4233 (412 aa).

The next 5 helical transmembrane spans lie at 35–55, 65–85, 164–184, 202–222, and 225–245; these read FIVF…VPAM, ALEL…IWIA, LMAC…AMHI, WWAI…ATGI, and MVAS…VGIV. The short motif at 210–215 is the Selectivity filter element; sequence TIGYGD. A nucleoside 3',5'-cyclic phosphate is bound at residue 270 to 388; sequence LFSHLTAGDI…RKINQIVEGR (119 aa).

It belongs to the potassium channel family.

It localises to the cell membrane. The protein is Putative potassium channel protein RPA4233 of Rhodopseudomonas palustris (strain ATCC BAA-98 / CGA009).